The chain runs to 173 residues: Shikimate kinase (173 aa).

Position 14–19 (14–19 (GAGKST)) interacts with ATP. Ser18 lines the Mg(2+) pocket. Positions 36, 60, and 82 each coordinate substrate. ATP is bound at residue Arg120. Arg140 is a binding site for substrate. Gln157 contacts ATP.

Belongs to the shikimate kinase family. As to quaternary structure, monomer. Mg(2+) is required as a cofactor.

The protein localises to the cytoplasm. The enzyme catalyses shikimate + ATP = 3-phosphoshikimate + ADP + H(+). The protein operates within metabolic intermediate biosynthesis; chorismate biosynthesis; chorismate from D-erythrose 4-phosphate and phosphoenolpyruvate: step 5/7. Its function is as follows. Catalyzes the specific phosphorylation of the 3-hydroxyl group of shikimic acid using ATP as a cosubstrate. The sequence is that of Shikimate kinase from Baumannia cicadellinicola subsp. Homalodisca coagulata.